The primary structure comprises 201 residues: Dimethylsulfoniopropionate lyase DddQ (201 aa).

The a divalent metal cation site is built by H130, E134, Y136, and H169.

The protein belongs to the non-heme iron-dependent dioxygenase family. As to quaternary structure, homodimer. A divalent metal cation is required as a cofactor.

It carries out the reaction S,S-dimethyl-beta-propiothetin = acrylate + dimethyl sulfide + H(+). May act as a dimethylsulfoniopropionate (DMSP) in vitro, releasing dimethyl sulfide (DMS). DMS is the principal form by which sulfur is transported from oceans to the atmosphere. The real activity of the protein is however subject to debate and it is unclear whether it constitutes a real dimethylsulfoniopropionate lyase in vivo. In Ruegeria pomeroyi (strain ATCC 700808 / DSM 15171 / DSS-3) (Silicibacter pomeroyi), this protein is Dimethylsulfoniopropionate lyase DddQ.